The chain runs to 856 residues: Facilitated trehalose transporter Tret1 (856 aa).

Disordered regions lie at residues 1–27 (MSGR…GKLK) and 62–202 (DPFL…KATS). Residues 1–389 (MSGRDNRGAG…LEVYRPTTNP (389 aa)) are Cytoplasmic-facing. A compositionally biased stretch (polar residues) spans 69–80 (VSPQRHPQTVRT). Residues 133-142 (EIREHRDRQQ) are compositionally biased toward basic and acidic residues. Residues 170–180 (GNSNTNNNKAA) show a composition bias toward polar residues. A phosphoserine mark is found at S247, S248, S249, S319, and S321. The interval 326–345 (LTSRQHFQQQRSISTDSRKS) is disordered. The segment covering 329 to 340 (RQHFQQQRSIST) has biased composition (polar residues). A helical transmembrane segment spans residues 390 to 410 (IFIWTQVLAALSVSLGSLVVG). The Extracellular segment spans residues 411–439 (FVSAYTSPALVSMTDRNITSFEVTQDAGS). Residue N427 is glycosylated (N-linked (GlcNAc...) asparagine). Residues 440-460 (WVGGIMPLAGLAGGIAGGPLI) form a helical membrane-spanning segment. Topologically, residues 461 to 472 (EYLGRRNTILAT) are cytoplasmic. Residues 473–493 (AVPFIVSSLLIACAVNVAMVL) traverse the membrane as a helical segment. The Extracellular segment spans residues 494 to 496 (CGR). Residues 497 to 517 (FLAGFCVGIASLSLPVYLGET) traverse the membrane as a helical segment. The Cytoplasmic segment spans residues 518–527 (VQPEVRGTLG). A helical membrane pass occupies residues 528–548 (LLPTAFGNIGILLCFVAGSFM). Residue N549 is glycosylated (N-linked (GlcNAc...) asparagine). Residues 549–551 (NWS) are Extracellular-facing. The helical transmembrane segment at 552–572 (MLAFLGAALPVPFLILMFLIP) threads the bilayer. At 573–635 (ETPRWFVSRG…ELLKRNNLKP (63 aa)) the chain is on the cytoplasmic side. Residues 636-656 (LSISLGLMFFQQLSGINAVIF) form a helical membrane-spanning segment. Topologically, residues 657-672 (YTVQIFKDAGSTIDGN) are extracellular. Residues 673–693 (ICTIIVGVVNFLATFIGIVLI) traverse the membrane as a helical segment. Topologically, residues 694–699 (DRAGRK) are cytoplasmic. The chain crosses the membrane as a helical span at residues 700-720 (ILLYVSNIAMILTLFVLGGFF). Residues 721 to 739 (YCKAHGPDVSNLGWLPLTC) lie on the Extracellular side of the membrane. A helical membrane pass occupies residues 740–760 (FVIYILGFSLGFGPIPWLMMG). Residues 761 to 766 (EILPAK) lie on the Cytoplasmic side of the membrane. Residues 767–787 (IRGSAASVATAFNWSCTFVVT) traverse the membrane as a helical segment. Over 788–800 (KTFQDLTVAMGAH) the chain is Extracellular. A helical membrane pass occupies residues 801–821 (GAFWLFGAICFVGLFFVIIYV). At 822-856 (PETQGKTLEDIERKMMGRVRRMSSVANIKPLSFNM) the chain is on the cytoplasmic side. Phosphoserine occurs at positions 844 and 845.

This sequence belongs to the major facilitator superfamily. Sugar transporter (TC 2.A.1.1) family. Trehalose transporter subfamily.

The protein resides in the cell membrane. Low-capacity facilitative transporter for trehalose. Does not transport maltose, sucrose or lactose. Mediates the bidirectional transfer of trehalose. Responsible for the transport of trehalose synthesized in the fat body and the incorporation of trehalose into other tissues that require a carbon source, thereby regulating trehalose levels in the hemolymph. In Drosophila erecta (Fruit fly), this protein is Facilitated trehalose transporter Tret1.